We begin with the raw amino-acid sequence, 1909 residues long: DENN domain-containing protein 4C (1909 aa).

Residues K40–V199 enclose the MABP domain. One can recognise a uDENN domain in the interval V191 to P364. The region spanning P385–K521 is the cDENN domain. The region spanning L523–G641 is the dDENN domain. Phosphoserine is present on residues S703, S737, and S741. The stretch at V821–A855 is one PPR repeat. E953, S965, S968, and S973 each carry phosphoserine. Residue T975 is modified to Phosphothreonine. Phosphoserine occurs at positions 989, 996, 1003, 1046, 1061, 1099, 1126, 1184, 1225, 1244, 1252, and 1278. Disordered regions lie at residues K1243–S1263 and S1277–L1338. Residues S1296–S1316 are compositionally biased toward polar residues. 3 positions are modified to phosphoserine: S1325, S1337, and S1346. The segment at S1419–T1474 is disordered. Low complexity predominate over residues L1426–G1440. Positions K1459 to H1468 are enriched in basic and acidic residues. Phosphoserine occurs at positions 1623, 1627, 1629, 1640, and 1799.

In terms of processing, phosphorylated in response to insulin.

It localises to the cytoplasmic vesicle membrane. Its subcellular location is the cell membrane. The protein localises to the cytoplasm. It is found in the cytosol. Its function is as follows. Guanine nucleotide exchange factor (GEF) activating RAB10. Promotes the exchange of GDP to GTP, converting inactive GDP-bound RAB10 into its active GTP-bound form. Thereby, stimulates SLC2A4/GLUT4 glucose transporter-enriched vesicles delivery to the plasma membrane in response to insulin. The chain is DENN domain-containing protein 4C (DENND4C) from Homo sapiens (Human).